Here is a 1074-residue protein sequence, read N- to C-terminus: Probable arabinosyltransferase C (1074 aa).

The next 10 helical transmembrane spans lie at 15 to 37, 214 to 236, 251 to 273, 415 to 437, 452 to 474, 516 to 538, 573 to 595, 608 to 630, 645 to 667, and 684 to 706; these read ARLV…PLLP, LLKL…ALHV, SRWW…WHFV, IIIG…ALLV, RFGY…FLIF, SVAR…AMTL, THQF…VAVT, FGAA…WYVS, FGFT…WFHF, and LLVA…SLTL.

Belongs to the emb family.

It is found in the cell membrane. Functionally, arabinosyl transferase responsible for the polymerization of arabinose into the arabinan of arabinogalactan. This chain is Probable arabinosyltransferase C (embC), found in Mycolicibacterium smegmatis (Mycobacterium smegmatis).